The primary structure comprises 310 residues: Protein FIP2 (310 aa).

The segment at 1 to 58 is disordered; that stretch reads MGFAPVTPAAVETYDPDVDHDDESNGLDGFRVRSKRSGKFSGGYSDSPREVGDGYGVR. Acidic residues predominate over residues 14-25; sequence YDPDVDHDDESN. A phosphoserine mark is found at serine 77 and serine 105. Disordered stretches follow at residues 115 to 135, 152 to 171, and 177 to 221; these read ATRLRTHGKPSSGDFSHGSGG, FKPKNFSKPEPNFSQDLDYD, and DRAE…GSSS. Residues 208-221 are compositionally biased toward polar residues; sequence PRNTGASNGYGSSS.

In terms of assembly, interacts with FRI. Interacts with WAV3.

This is Protein FIP2 from Arabidopsis thaliana (Mouse-ear cress).